The primary structure comprises 184 residues: ATP synthase subunit b, chloroplastic (184 aa).

The chain crosses the membrane as a helical span at residues 27–49 (LATNPINLSVVLGVLIFFGKGVL).

It belongs to the ATPase B chain family. F-type ATPases have 2 components, F(1) - the catalytic core - and F(0) - the membrane proton channel. F(1) has five subunits: alpha(3), beta(3), gamma(1), delta(1), epsilon(1). F(0) has four main subunits: a(1), b(1), b'(1) and c(10-14). The alpha and beta chains form an alternating ring which encloses part of the gamma chain. F(1) is attached to F(0) by a central stalk formed by the gamma and epsilon chains, while a peripheral stalk is formed by the delta, b and b' chains.

The protein localises to the plastid. It localises to the chloroplast thylakoid membrane. Functionally, f(1)F(0) ATP synthase produces ATP from ADP in the presence of a proton or sodium gradient. F-type ATPases consist of two structural domains, F(1) containing the extramembraneous catalytic core and F(0) containing the membrane proton channel, linked together by a central stalk and a peripheral stalk. During catalysis, ATP synthesis in the catalytic domain of F(1) is coupled via a rotary mechanism of the central stalk subunits to proton translocation. Component of the F(0) channel, it forms part of the peripheral stalk, linking F(1) to F(0). This Cuscuta exaltata (Tall dodder) protein is ATP synthase subunit b, chloroplastic.